A 458-amino-acid polypeptide reads, in one-letter code: A-type ATP synthase subunit B (458 aa).

It belongs to the ATPase alpha/beta chains family. Has multiple subunits with at least A(3), B(3), C, D, E, F, H, I and proteolipid K(x).

It is found in the cell membrane. Component of the A-type ATP synthase that produces ATP from ADP in the presence of a proton gradient across the membrane. The B chain is a regulatory subunit. The chain is A-type ATP synthase subunit B from Methanocorpusculum labreanum (strain ATCC 43576 / DSM 4855 / Z).